The following is a 468-amino-acid chain: ATP synthase subunit beta (468 aa).

155 to 162 provides a ligand contact to ATP; the sequence is GGAGVGKT.

The protein belongs to the ATPase alpha/beta chains family. In terms of assembly, F-type ATPases have 2 components, CF(1) - the catalytic core - and CF(0) - the membrane proton channel. CF(1) has five subunits: alpha(3), beta(3), gamma(1), delta(1), epsilon(1). CF(0) has three main subunits: a(1), b(2) and c(9-12). The alpha and beta chains form an alternating ring which encloses part of the gamma chain. CF(1) is attached to CF(0) by a central stalk formed by the gamma and epsilon chains, while a peripheral stalk is formed by the delta and b chains.

The protein resides in the cell membrane. It carries out the reaction ATP + H2O + 4 H(+)(in) = ADP + phosphate + 5 H(+)(out). Produces ATP from ADP in the presence of a proton gradient across the membrane. The catalytic sites are hosted primarily by the beta subunits. The protein is ATP synthase subunit beta of Streptococcus pneumoniae serotype 19F (strain G54).